The primary structure comprises 600 residues: Adenine deaminase (600 aa).

It belongs to the metallo-dependent hydrolases superfamily. Adenine deaminase family. It depends on Mn(2+) as a cofactor.

It catalyses the reaction adenine + H2O + H(+) = hypoxanthine + NH4(+). The protein is Adenine deaminase of Chelativorans sp. (strain BNC1).